Here is an 809-residue protein sequence, read N- to C-terminus: Ferric-pyoverdine BN7/BN8 receptor (809 aa).

A signal peptide spans 1–45 (MNHTARKRQGWQRSVSQKLAGAVVQGIACMGASAPLLLMPAWATA). Residues 166–273 (TPRETPQSLT…PSATINLIRK (108 aa)) enclose the TBDR plug domain. Positions 278–809 (EAQASITGEA…NVMTSFKYSF (532 aa)) constitute a TBDR beta-barrel domain. Positions 792 to 809 (YGVYGTPRNVMTSFKYSF) match the TonB C-terminal box motif.

This sequence belongs to the TonB-dependent receptor family.

Its subcellular location is the cell outer membrane. In terms of biological role, specific receptor for the siderophores ferric pyoverdines (pseudobactins) BN8 and BN7, iron chelating molecules that allow the organism to extract iron from the environment, especially under iron-restricted conditions. The protein is Ferric-pyoverdine BN7/BN8 receptor (pupB) of Pseudomonas putida (Arthrobacter siderocapsulatus).